The primary structure comprises 574 residues: Proline--tRNA ligase (574 aa).

It belongs to the class-II aminoacyl-tRNA synthetase family. ProS type 1 subfamily. In terms of assembly, homodimer.

The protein resides in the cytoplasm. The catalysed reaction is tRNA(Pro) + L-proline + ATP = L-prolyl-tRNA(Pro) + AMP + diphosphate. Its function is as follows. Catalyzes the attachment of proline to tRNA(Pro) in a two-step reaction: proline is first activated by ATP to form Pro-AMP and then transferred to the acceptor end of tRNA(Pro). As ProRS can inadvertently accommodate and process non-cognate amino acids such as alanine and cysteine, to avoid such errors it has two additional distinct editing activities against alanine. One activity is designated as 'pretransfer' editing and involves the tRNA(Pro)-independent hydrolysis of activated Ala-AMP. The other activity is designated 'posttransfer' editing and involves deacylation of mischarged Ala-tRNA(Pro). The misacylated Cys-tRNA(Pro) is not edited by ProRS. The sequence is that of Proline--tRNA ligase from Fervidobacterium nodosum (strain ATCC 35602 / DSM 5306 / Rt17-B1).